Here is a 160-residue protein sequence, read N- to C-terminus: SsrA-binding protein (160 aa).

Belongs to the SmpB family.

It localises to the cytoplasm. Required for rescue of stalled ribosomes mediated by trans-translation. Binds to transfer-messenger RNA (tmRNA), required for stable association of tmRNA with ribosomes. tmRNA and SmpB together mimic tRNA shape, replacing the anticodon stem-loop with SmpB. tmRNA is encoded by the ssrA gene; the 2 termini fold to resemble tRNA(Ala) and it encodes a 'tag peptide', a short internal open reading frame. During trans-translation Ala-aminoacylated tmRNA acts like a tRNA, entering the A-site of stalled ribosomes, displacing the stalled mRNA. The ribosome then switches to translate the ORF on the tmRNA; the nascent peptide is terminated with the 'tag peptide' encoded by the tmRNA and targeted for degradation. The ribosome is freed to recommence translation, which seems to be the essential function of trans-translation. The chain is SsrA-binding protein from Rhodospirillum rubrum (strain ATCC 11170 / ATH 1.1.1 / DSM 467 / LMG 4362 / NCIMB 8255 / S1).